Here is a 707-residue protein sequence, read N- to C-terminus: Integrator complex subunit 13 (707 aa).

The span at 565 to 625 (PPEEEERKKR…AEAEVIKDSP (61 aa)) shows a compositional bias: basic and acidic residues. A disordered region spans residues 565-651 (PPEEEERKKR…TGPAEKSKGP (87 aa)). The stretch at 567 to 622 (EEEERKKRGRKREDKEEKAEKPPKENEHEKKWQESERVKSVLDREKEDLAEAEVIK) forms a coiled coil. Positions 573–583 (KRGRKREDKEE) match the Nuclear localization signal (NLS) motif. Positions 650–695 (GPMSLLSLWSSRINTANSRKHQEFVGRLNSVNNKAELYQHLKEENG) are cleavage module binding motif (CMBM).

This sequence belongs to the Integrator subunit 13 family. In terms of assembly, component of the Integrator complex, composed of core subunits INTS1, INTS2, INTS3, INTS4, INTS5, INTS6, INTS7, INTS8, INTS9/RC74, INTS10, INTS11/CPSF3L, INTS12, INTS13, INTS14 and INTS15. The core complex associates with protein phosphatase 2A subunits PPP2CA and PPP2R1A, to form the Integrator-PP2A (INTAC) complex. INTS13 is part of the tail subcomplex, composed of INTS10, INTS13, INTS14 and INTS15.

The protein resides in the nucleus. It localises to the cytoplasm. In terms of biological role, component of the integrator complex, a multiprotein complex that terminates RNA polymerase II (Pol II) transcription in the promoter-proximal region of genes. The integrator complex provides a quality checkpoint during transcription elongation by driving premature transcription termination of transcripts that are unfavorably configured for transcriptional elongation: the complex terminates transcription by (1) catalyzing dephosphorylation of the C-terminal domain (CTD) of Pol II subunit POLR2A/RPB1 and SUPT5H/SPT5, (2) degrading the exiting nascent RNA transcript via endonuclease activity and (3) promoting the release of Pol II from bound DNA. The integrator complex is also involved in terminating the synthesis of non-coding Pol II transcripts, such as enhancer RNAs (eRNAs), small nuclear RNAs (snRNAs), telomerase RNAs and long non-coding RNAs (lncRNAs). Within the integrator complex, INTS13 is part of the integrator tail module and acts as a platform for the recruitment of transcription factors at promoters. The polypeptide is Integrator complex subunit 13 (Xenopus tropicalis (Western clawed frog)).